The chain runs to 100 residues: Phosphoribosylformylglycinamidine synthase subunit PurS (100 aa).

It belongs to the PurS family. In terms of assembly, homodimer. Part of the FGAM synthase complex composed of 1 PurL, 1 PurQ and 2 PurS subunits.

The protein localises to the cytoplasm. It carries out the reaction N(2)-formyl-N(1)-(5-phospho-beta-D-ribosyl)glycinamide + L-glutamine + ATP + H2O = 2-formamido-N(1)-(5-O-phospho-beta-D-ribosyl)acetamidine + L-glutamate + ADP + phosphate + H(+). It functions in the pathway purine metabolism; IMP biosynthesis via de novo pathway; 5-amino-1-(5-phospho-D-ribosyl)imidazole from N(2)-formyl-N(1)-(5-phospho-D-ribosyl)glycinamide: step 1/2. Part of the phosphoribosylformylglycinamidine synthase complex involved in the purines biosynthetic pathway. Catalyzes the ATP-dependent conversion of formylglycinamide ribonucleotide (FGAR) and glutamine to yield formylglycinamidine ribonucleotide (FGAM) and glutamate. The FGAM synthase complex is composed of three subunits. PurQ produces an ammonia molecule by converting glutamine to glutamate. PurL transfers the ammonia molecule to FGAR to form FGAM in an ATP-dependent manner. PurS interacts with PurQ and PurL and is thought to assist in the transfer of the ammonia molecule from PurQ to PurL. The chain is Phosphoribosylformylglycinamidine synthase subunit PurS from Synechocystis sp. (strain ATCC 27184 / PCC 6803 / Kazusa).